A 373-amino-acid polypeptide reads, in one-letter code: Phosphoserine aminotransferase (373 aa).

R41 contributes to the L-glutamate binding site. Residues 75-76, W101, T152, D172, and Q195 contribute to the pyridoxal 5'-phosphate site; that span reads GT. Residue K196 is modified to N6-(pyridoxal phosphate)lysine. 236 to 237 contributes to the pyridoxal 5'-phosphate binding site; it reads NT.

Belongs to the class-V pyridoxal-phosphate-dependent aminotransferase family. SerC subfamily. As to quaternary structure, homodimer. Pyridoxal 5'-phosphate is required as a cofactor.

It localises to the cytoplasm. It catalyses the reaction O-phospho-L-serine + 2-oxoglutarate = 3-phosphooxypyruvate + L-glutamate. The catalysed reaction is 4-(phosphooxy)-L-threonine + 2-oxoglutarate = (R)-3-hydroxy-2-oxo-4-phosphooxybutanoate + L-glutamate. It functions in the pathway amino-acid biosynthesis; L-serine biosynthesis; L-serine from 3-phospho-D-glycerate: step 2/3. Catalyzes the reversible conversion of 3-phosphohydroxypyruvate to phosphoserine and of 3-hydroxy-2-oxo-4-phosphonooxybutanoate to phosphohydroxythreonine. The protein is Phosphoserine aminotransferase of Lactobacillus helveticus (strain DPC 4571).